Consider the following 598-residue polypeptide: Elongation factor 4 (598 aa).

The 183-residue stretch at Lys2–Glu184 folds into the tr-type G domain. Residues Asp14–Thr19 and Asn131–Asp134 contribute to the GTP site.

This sequence belongs to the TRAFAC class translation factor GTPase superfamily. Classic translation factor GTPase family. LepA subfamily.

Its subcellular location is the cell inner membrane. It carries out the reaction GTP + H2O = GDP + phosphate + H(+). Its function is as follows. Required for accurate and efficient protein synthesis under certain stress conditions. May act as a fidelity factor of the translation reaction, by catalyzing a one-codon backward translocation of tRNAs on improperly translocated ribosomes. Back-translocation proceeds from a post-translocation (POST) complex to a pre-translocation (PRE) complex, thus giving elongation factor G a second chance to translocate the tRNAs correctly. Binds to ribosomes in a GTP-dependent manner. This is Elongation factor 4 from Haemophilus influenzae (strain 86-028NP).